The sequence spans 934 residues: Serine/threonine-protein kinase atg1 (934 aa).

A Protein kinase domain is found at 22–328 (YTRLDEIGRG…SDFFDCDTIT (307 aa)). Residues 28–36 (IGRGSFATV) and lysine 51 contribute to the ATP site. Residue aspartate 165 is the Proton acceptor of the active site. Disordered regions lie at residues 335–432 (IADD…PRRP), 462–481 (RNTY…TKEE), 531–580 (RRPG…YGQS), 684–703 (TDPS…TDLT), 800–822 (RLPP…GSGA), and 878–900 (EEEE…RRDG). The segment covering 340–368 (PSTSRRSSVAVNTSGSTSRPQSRTGSRTP) has biased composition (polar residues). Basic and acidic residues predominate over residues 371–386 (MKREKDASYPGKKDDQ). A compositionally biased stretch (low complexity) spans 538–550 (SSTATATSPLATT). A compositionally biased stretch (basic and acidic residues) spans 561-577 (ARADSTHTRQGSYERRY).

Belongs to the protein kinase superfamily. Ser/Thr protein kinase family. APG1/unc-51/ULK1 subfamily. As to quaternary structure, homodimer. Forms a ternary complex with ATG13 and ATG17.

The protein resides in the cytoplasm. The protein localises to the preautophagosomal structure membrane. It catalyses the reaction L-seryl-[protein] + ATP = O-phospho-L-seryl-[protein] + ADP + H(+). The catalysed reaction is L-threonyl-[protein] + ATP = O-phospho-L-threonyl-[protein] + ADP + H(+). Functionally, serine/threonine protein kinase involved in the cytoplasm to vacuole transport (Cvt) and found to be essential in autophagy, where it is required for the formation of autophagosomes. Involved in the clearance of protein aggregates which cannot be efficiently cleared by the proteasome. Required for selective autophagic degradation of the nucleus (nucleophagy) as well as for mitophagy which contributes to regulate mitochondrial quantity and quality by eliminating the mitochondria to a basal level to fulfill cellular energy requirements and preventing excess ROS production. Also involved in endoplasmic reticulum-specific autophagic process, in selective removal of ER-associated degradation (ERAD) substrates. Plays a key role in ATG9 and ATG23 cycling through the pre-autophagosomal structure and is necessary to promote ATG18 binding to ATG9 through phosphorylation of ATG9. Catalyzes phosphorylation of ATG4, decreasing the interaction between ATG4 and ATG8 and impairing deconjugation of PE-conjugated forms of ATG8. Required for conidiation and development of aerial hyphae. The protein is Serine/threonine-protein kinase atg1 of Aspergillus oryzae (strain ATCC 42149 / RIB 40) (Yellow koji mold).